We begin with the raw amino-acid sequence, 442 residues long: Ribosomal protein uS12 methylthiotransferase RimO (442 aa).

Residues Pro-8–Ala-118 enclose the MTTase N-terminal domain. Residues Cys-17, Cys-53, Cys-82, Cys-150, Cys-154, and Cys-157 each contribute to the [4Fe-4S] cluster site. A Radical SAM core domain is found at Leu-136–Arg-373. The TRAM domain maps to Ala-376 to Gly-442.

The protein belongs to the methylthiotransferase family. RimO subfamily. It depends on [4Fe-4S] cluster as a cofactor.

It localises to the cytoplasm. It carries out the reaction L-aspartate(89)-[ribosomal protein uS12]-hydrogen + (sulfur carrier)-SH + AH2 + 2 S-adenosyl-L-methionine = 3-methylsulfanyl-L-aspartate(89)-[ribosomal protein uS12]-hydrogen + (sulfur carrier)-H + 5'-deoxyadenosine + L-methionine + A + S-adenosyl-L-homocysteine + 2 H(+). In terms of biological role, catalyzes the methylthiolation of an aspartic acid residue of ribosomal protein uS12. The chain is Ribosomal protein uS12 methylthiotransferase RimO from Aeromonas salmonicida (strain A449).